Here is a 263-residue protein sequence, read N- to C-terminus: Pyridoxine 5'-phosphate synthase (263 aa).

Asn-15 provides a ligand contact to 3-amino-2-oxopropyl phosphate. Asp-17–His-18 is a binding site for 1-deoxy-D-xylulose 5-phosphate. Arg-26 contacts 3-amino-2-oxopropyl phosphate. His-51 serves as the catalytic Proton acceptor. Arg-53 and His-58 together coordinate 1-deoxy-D-xylulose 5-phosphate. The active-site Proton acceptor is Glu-78. Thr-108 is a binding site for 1-deoxy-D-xylulose 5-phosphate. The active-site Proton donor is the His-199. 3-amino-2-oxopropyl phosphate-binding positions include Gly-200 and Gly-221–His-222.

The protein belongs to the PNP synthase family. In terms of assembly, homooctamer; tetramer of dimers.

It is found in the cytoplasm. The enzyme catalyses 3-amino-2-oxopropyl phosphate + 1-deoxy-D-xylulose 5-phosphate = pyridoxine 5'-phosphate + phosphate + 2 H2O + H(+). It functions in the pathway cofactor biosynthesis; pyridoxine 5'-phosphate biosynthesis; pyridoxine 5'-phosphate from D-erythrose 4-phosphate: step 5/5. Its function is as follows. Catalyzes the complicated ring closure reaction between the two acyclic compounds 1-deoxy-D-xylulose-5-phosphate (DXP) and 3-amino-2-oxopropyl phosphate (1-amino-acetone-3-phosphate or AAP) to form pyridoxine 5'-phosphate (PNP) and inorganic phosphate. This is Pyridoxine 5'-phosphate synthase from Ralstonia nicotianae (strain ATCC BAA-1114 / GMI1000) (Ralstonia solanacearum).